The sequence spans 254 residues: Probable triosephosphate isomerase 2 (254 aa).

Residue 9–11 (NMK) coordinates substrate. His96 serves as the catalytic Electrophile. Glu168 functions as the Proton acceptor in the catalytic mechanism. Substrate contacts are provided by Gly174 and Ser212.

This sequence belongs to the triosephosphate isomerase family. In terms of assembly, homodimer.

The protein resides in the cytoplasm. The enzyme catalyses D-glyceraldehyde 3-phosphate = dihydroxyacetone phosphate. It participates in carbohydrate biosynthesis; gluconeogenesis. It functions in the pathway carbohydrate degradation; glycolysis; D-glyceraldehyde 3-phosphate from glycerone phosphate: step 1/1. Functionally, involved in the gluconeogenesis. Catalyzes stereospecifically the conversion of dihydroxyacetone phosphate (DHAP) to D-glyceraldehyde-3-phosphate (G3P). In Listeria monocytogenes serotype 4b (strain F2365), this protein is Probable triosephosphate isomerase 2.